We begin with the raw amino-acid sequence, 160 residues long: NADH-quinone oxidoreductase subunit I (160 aa).

4Fe-4S ferredoxin-type domains follow at residues 52-81 (RRYSNGEERCIACKLCEVICPAQAIVIEAE) and 91-120 (TRYDIDMTKCIYCGLCQEACPVDAIVEGPN). [4Fe-4S] cluster contacts are provided by cysteine 61, cysteine 64, cysteine 67, cysteine 71, cysteine 100, cysteine 103, cysteine 106, and cysteine 110.

Belongs to the complex I 23 kDa subunit family. As to quaternary structure, NDH-1 is composed of 14 different subunits. Subunits NuoA, H, J, K, L, M, N constitute the membrane sector of the complex. The cofactor is [4Fe-4S] cluster.

The protein localises to the cell membrane. The catalysed reaction is a quinone + NADH + 5 H(+)(in) = a quinol + NAD(+) + 4 H(+)(out). In terms of biological role, NDH-1 shuttles electrons from NADH, via FMN and iron-sulfur (Fe-S) centers, to quinones in the respiratory chain. The immediate electron acceptor for the enzyme in this species is believed to be ubiquinone. Couples the redox reaction to proton translocation (for every two electrons transferred, four hydrogen ions are translocated across the cytoplasmic membrane), and thus conserves the redox energy in a proton gradient. This chain is NADH-quinone oxidoreductase subunit I, found in Wolbachia sp. subsp. Brugia malayi (strain TRS).